Consider the following 124-residue polypeptide: UPF0231 protein Sputcn32_0682 (124 aa).

It belongs to the UPF0231 family.

This is UPF0231 protein Sputcn32_0682 from Shewanella putrefaciens (strain CN-32 / ATCC BAA-453).